Consider the following 213-residue polypeptide: Motile sperm domain-containing protein 1 (213 aa).

The MSP domain occupies 16–143 (PVFVFPTELI…KEHLTESLFF (128 aa)). Transmembrane regions (helical) follow at residues 159 to 179 (SLLTVFLGVVCIAALMLPTLG) and 191 to 211 (LSVNQKLVAAYILGLITMAIL). The Nuclear export signal signature appears at 205 to 208 (LITM).

The protein localises to the endoplasmic reticulum membrane. The protein resides in the golgi apparatus membrane. Its function is as follows. Plays a role in differentiation and/or proliferation of mesenchymal stem cells. Proposed to be involved in epithelial-to-mesenchymal transition (EMT). However, another study suggests that it is not required for EMT or stem cell self-renewal and acts during later stages of differentiation. This chain is Motile sperm domain-containing protein 1 (MOSPD1), found in Homo sapiens (Human).